Reading from the N-terminus, the 209-residue chain is Redox-sensing transcriptional repressor Rex (209 aa).

Positions 16–55 (LYYRFIQNLSLSGKQRVSSAELSEAVKVDSATIRRDFSYF) form a DNA-binding region, H-T-H motif. 90 to 95 (GVGNLG) serves as a coordination point for NAD(+).

Belongs to the transcriptional regulatory Rex family. As to quaternary structure, homodimer.

It localises to the cytoplasm. Functionally, modulates transcription in response to changes in cellular NADH/NAD(+) redox state. This chain is Redox-sensing transcriptional repressor Rex, found in Bacillus cereus (strain Q1).